Here is a 155-residue protein sequence, read N- to C-terminus: 2-C-methyl-D-erythritol 2,4-cyclodiphosphate synthase (155 aa).

Positions 8 and 10 each coordinate a divalent metal cation. Residues 8-10 and 34-35 each bind 4-CDP-2-C-methyl-D-erythritol 2-phosphate; these read DVH and HS. An a divalent metal cation-binding site is contributed by histidine 42. 4-CDP-2-C-methyl-D-erythritol 2-phosphate-binding positions include 56 to 58, 61 to 65, 100 to 106, 132 to 135, phenylalanine 139, and lysine 142; these read DIG, FPDSD, AQKPKML, and TTEE.

It belongs to the IspF family. As to quaternary structure, homotrimer. It depends on a divalent metal cation as a cofactor.

The enzyme catalyses 4-CDP-2-C-methyl-D-erythritol 2-phosphate = 2-C-methyl-D-erythritol 2,4-cyclic diphosphate + CMP. Its pathway is isoprenoid biosynthesis; isopentenyl diphosphate biosynthesis via DXP pathway; isopentenyl diphosphate from 1-deoxy-D-xylulose 5-phosphate: step 4/6. Involved in the biosynthesis of isopentenyl diphosphate (IPP) and dimethylallyl diphosphate (DMAPP), two major building blocks of isoprenoid compounds. Catalyzes the conversion of 4-diphosphocytidyl-2-C-methyl-D-erythritol 2-phosphate (CDP-ME2P) to 2-C-methyl-D-erythritol 2,4-cyclodiphosphate (ME-CPP) with a corresponding release of cytidine 5-monophosphate (CMP). The protein is 2-C-methyl-D-erythritol 2,4-cyclodiphosphate synthase of Clostridium botulinum (strain Kyoto / Type A2).